A 67-amino-acid polypeptide reads, in one-letter code: Conotoxin Cl6.6a (67 aa).

The first 24 residues, 1 to 24 (MKLTCVLIAAVLLLAVCQLDSADA), serve as a signal peptide directing secretion. A propeptide spanning residues 25-37 (TGYMRKNPSLRSP) is cleaved from the precursor. Cystine bridges form between Cys-43/Cys-57, Cys-50/Cys-61, and Cys-56/Cys-65.

It belongs to the conotoxin O1 superfamily. Expressed by the venom duct.

The protein localises to the secreted. This is Conotoxin Cl6.6a from Californiconus californicus (California cone).